Reading from the N-terminus, the 185-residue chain is Ribosome-recycling factor (185 aa).

The segment at 139 to 159 is disordered; sequence IDSLEKDGDVSGDEADRAKKK. Residues 141–159 show a composition bias toward basic and acidic residues; the sequence is SLEKDGDVSGDEADRAKKK.

It belongs to the RRF family.

Its subcellular location is the cytoplasm. Functionally, responsible for the release of ribosomes from messenger RNA at the termination of protein biosynthesis. May increase the efficiency of translation by recycling ribosomes from one round of translation to another. The protein is Ribosome-recycling factor of Sorangium cellulosum (strain So ce56) (Polyangium cellulosum (strain So ce56)).